The following is a 159-amino-acid chain: Ecotin (159 aa).

Positions 1–22 are cleaved as a signal peptide; sequence MRPTPMTAILALTLAAAAPAMA. Cys68 and Cys105 form a disulfide bridge.

This sequence belongs to the protease inhibitor I11 (ecotin) family. Homodimer.

The protein resides in the periplasm. Functionally, general inhibitor of family S1 serine proteases. This is Ecotin from Pseudomonas putida (strain GB-1).